The following is a 233-amino-acid chain: Opacity protein opA67 (233 aa).

Residue Ala-1 is a signal peptide.

It belongs to the opacity porin family.

Its subcellular location is the cell outer membrane. Its function is as follows. Implicated in a number of adherence functions. OPA proteins are implicated in pathogenesis and are subject to phase variation. The chain is Opacity protein opA67 from Neisseria gonorrhoeae.